Here is a 126-residue protein sequence, read N- to C-terminus: Cysteine-rich tail protein 1 (126 aa).

Positions 1-89 are disordered; the sequence is MDPHETLVKN…PAGLAYAGPP (89 aa).

This sequence belongs to the CYSRT1 family. In terms of assembly, interacts with components of the late cornfied envelope (LCE).

It localises to the cornified envelope. Component of the stratum corneum that may contribute to epidermal antimicrobial host defenses. The protein is Cysteine-rich tail protein 1 (CYSRT1) of Bos taurus (Bovine).